The following is a 267-amino-acid chain: Deoxyribose-phosphate aldolase (267 aa).

The Proton donor/acceptor role is filled by Asp123. The active-site Schiff-base intermediate with acetaldehyde is the Lys185. Lys217 functions as the Proton donor/acceptor in the catalytic mechanism.

Belongs to the DeoC/FbaB aldolase family. DeoC type 1 subfamily.

The protein resides in the cytoplasm. The catalysed reaction is 2-deoxy-D-ribose 5-phosphate = D-glyceraldehyde 3-phosphate + acetaldehyde. It participates in carbohydrate degradation; 2-deoxy-D-ribose 1-phosphate degradation; D-glyceraldehyde 3-phosphate and acetaldehyde from 2-deoxy-alpha-D-ribose 1-phosphate: step 2/2. In terms of biological role, catalyzes a reversible aldol reaction between acetaldehyde and D-glyceraldehyde 3-phosphate to generate 2-deoxy-D-ribose 5-phosphate. This is Deoxyribose-phosphate aldolase from Coccidioides immitis (strain RS) (Valley fever fungus).